We begin with the raw amino-acid sequence, 416 residues long: Gamma-glutamyl phosphate reductase (416 aa).

Belongs to the gamma-glutamyl phosphate reductase family.

It localises to the cytoplasm. The enzyme catalyses L-glutamate 5-semialdehyde + phosphate + NADP(+) = L-glutamyl 5-phosphate + NADPH + H(+). Its pathway is amino-acid biosynthesis; L-proline biosynthesis; L-glutamate 5-semialdehyde from L-glutamate: step 2/2. Catalyzes the NADPH-dependent reduction of L-glutamate 5-phosphate into L-glutamate 5-semialdehyde and phosphate. The product spontaneously undergoes cyclization to form 1-pyrroline-5-carboxylate. This is Gamma-glutamyl phosphate reductase from Streptococcus pyogenes serotype M1.